The sequence spans 1209 residues: Sterol 3-beta-glucosyltransferase (1209 aa).

The GRAM 1 domain maps to 167–217; it reads ERLIKKFLPNDDEKYIEEYPCWLLRDIMIQGHAYLTNKHLFFFAFIPNFES. In terms of domain architecture, PH spans 218 to 315; sequence DFNVTGSLRL…WVSSIKKQMF (98 aa). The GRAM 2 domain occupies 568-634; the sequence is VRFRQHFSFD…EDVENCYKET (67 aa). Serine 745, arginine 746, aspartate 748, asparagine 1019, valine 1048, histidine 1050, histidine 1063, serine 1066, glycine 1067, threonine 1068, aspartate 1087, and glutamine 1088 together coordinate UDP-alpha-D-glucose. The disordered stretch occupies residues 1186–1209; it reads AKGNEKEEYSSEGSGSNDGSWLLI. The segment covering 1196–1209 has biased composition (low complexity); the sequence is SEGSGSNDGSWLLI.

This sequence belongs to the glycosyltransferase 28 family.

The protein localises to the cytoplasm. It is found in the membrane. It carries out the reaction a sterol + UDP-alpha-D-glucose = a sterol 3-beta-D-glucoside + UDP + H(+). The enzyme catalyses ergosterol + UDP-alpha-D-glucose = ergosteryl 3-beta-D-glucoside + UDP + H(+). Functionally, sterol glycosyltransferase responsible for the glycosylation of ergosterol to form ergosterol-glucoside. This chain is Sterol 3-beta-glucosyltransferase, found in Kluyveromyces lactis (strain ATCC 8585 / CBS 2359 / DSM 70799 / NBRC 1267 / NRRL Y-1140 / WM37) (Yeast).